The chain runs to 207 residues: Gene 66 protein (207 aa).

This chain is Gene 66 protein (66), found in Mycobacterium (Mycobacteriophage L5).